Here is a 250-residue protein sequence, read N- to C-terminus: Ubiquinone/menaquinone biosynthesis C-methyltransferase UbiE (250 aa).

S-adenosyl-L-methionine contacts are provided by residues threonine 73, aspartate 94, 122-123, and serine 139; that span reads NA.

Belongs to the class I-like SAM-binding methyltransferase superfamily. MenG/UbiE family.

It catalyses the reaction a 2-demethylmenaquinol + S-adenosyl-L-methionine = a menaquinol + S-adenosyl-L-homocysteine + H(+). It carries out the reaction a 2-methoxy-6-(all-trans-polyprenyl)benzene-1,4-diol + S-adenosyl-L-methionine = a 5-methoxy-2-methyl-3-(all-trans-polyprenyl)benzene-1,4-diol + S-adenosyl-L-homocysteine + H(+). The protein operates within quinol/quinone metabolism; menaquinone biosynthesis; menaquinol from 1,4-dihydroxy-2-naphthoate: step 2/2. It functions in the pathway cofactor biosynthesis; ubiquinone biosynthesis. In terms of biological role, methyltransferase required for the conversion of demethylmenaquinol (DMKH2) to menaquinol (MKH2) and the conversion of 2-polyprenyl-6-methoxy-1,4-benzoquinol (DDMQH2) to 2-polyprenyl-3-methyl-6-methoxy-1,4-benzoquinol (DMQH2). The protein is Ubiquinone/menaquinone biosynthesis C-methyltransferase UbiE of Francisella tularensis subsp. tularensis (strain WY96-3418).